A 116-amino-acid chain; its full sequence is Ribosome-binding factor A (116 aa).

The protein belongs to the RbfA family. As to quaternary structure, monomer. Binds 30S ribosomal subunits, but not 50S ribosomal subunits or 70S ribosomes.

The protein resides in the cytoplasm. In terms of biological role, one of several proteins that assist in the late maturation steps of the functional core of the 30S ribosomal subunit. Associates with free 30S ribosomal subunits (but not with 30S subunits that are part of 70S ribosomes or polysomes). Required for efficient processing of 16S rRNA. May interact with the 5'-terminal helix region of 16S rRNA. The protein is Ribosome-binding factor A of Clostridium botulinum (strain Eklund 17B / Type B).